A 609-amino-acid chain; its full sequence is Glutamine--fructose-6-phosphate aminotransferase [isomerizing] (609 aa).

Residue C2 is the Nucleophile; for GATase activity of the active site. In terms of domain architecture, Glutamine amidotransferase type-2 spans 2–219 (CGIFGYIGAK…SGELAVVGLG (218 aa)). SIS domains lie at 280 to 426 (ISEK…LKQT) and 458 to 599 (WAND…IDRP). Catalysis depends on K604, which acts as the For Fru-6P isomerization activity.

In terms of assembly, homodimer.

The protein resides in the cytoplasm. The enzyme catalyses D-fructose 6-phosphate + L-glutamine = D-glucosamine 6-phosphate + L-glutamate. Its function is as follows. Catalyzes the first step in hexosamine metabolism, converting fructose-6P into glucosamine-6P using glutamine as a nitrogen source. The chain is Glutamine--fructose-6-phosphate aminotransferase [isomerizing] from Chlamydia caviae (strain ATCC VR-813 / DSM 19441 / 03DC25 / GPIC) (Chlamydophila caviae).